A 919-amino-acid polypeptide reads, in one-letter code: DNA-directed RNA polymerase 132 kDa polypeptide (919 aa).

The protein belongs to the RNA polymerase beta chain family. The DNA-dependent RNA polymerase used for intermediate and late genes expression consists of eight subunits (147) kDa, (133) kDa, (35) kDa, (30) kDa, (22) kDa, (19) kDa, (18) kDa and (7) kDa totalling more than 500 kDa in mass. The same holoenzyme, with the addition of the transcription-specificity factor RAP94, is used for early gene expression.

Its subcellular location is the virion. The enzyme catalyses RNA(n) + a ribonucleoside 5'-triphosphate = RNA(n+1) + diphosphate. In terms of biological role, part of the DNA-dependent RNA polymerase which catalyzes the transcription of viral DNA into RNA using the four ribonucleoside triphosphates as substrates. Responsible for the transcription of early, intermediate and late genes. DNA-dependent RNA polymerase associates with the early transcription factor (ETF), itself composed of D6 and A7, thereby allowing the early genes transcription. Late transcription, and probably also intermediate transcription, require newly synthesized RNA polymerase. This chain is DNA-directed RNA polymerase 132 kDa polypeptide (RPO132), found in Sheeppox virus (strain KS-1) (SPPV).